Here is a 288-residue protein sequence, read N- to C-terminus: Bis(5'-nucleosyl)-tetraphosphatase, symmetrical (288 aa).

Belongs to the Ap4A hydrolase family.

The catalysed reaction is P(1),P(4)-bis(5'-adenosyl) tetraphosphate + H2O = 2 ADP + 2 H(+). Its function is as follows. Hydrolyzes diadenosine 5',5'''-P1,P4-tetraphosphate to yield ADP. In Pseudomonas putida (strain GB-1), this protein is Bis(5'-nucleosyl)-tetraphosphatase, symmetrical.